We begin with the raw amino-acid sequence, 81 residues long: Large ribosomal subunit protein uL23 (81 aa).

It belongs to the universal ribosomal protein uL23 family. As to quaternary structure, part of the 50S ribosomal subunit. Contacts protein L29.

Its function is as follows. Binds to 23S rRNA. One of the proteins that surrounds the polypeptide exit tunnel on the outside of the ribosome. This is Large ribosomal subunit protein uL23 from Saccharolobus solfataricus (strain ATCC 35092 / DSM 1617 / JCM 11322 / P2) (Sulfolobus solfataricus).